The chain runs to 103 residues: Defensin-like protein 268 (103 aa).

The N-terminal stretch at 1–24 is a signal peptide; the sequence is MARLIFHFVFALILAAYLLSVTDA. Disulfide bonds link C44–C103, C68–C87, C74–C98, and C78–C100.

The protein belongs to the DEFL family.

It is found in the secreted. In Arabidopsis thaliana (Mouse-ear cress), this protein is Defensin-like protein 268.